We begin with the raw amino-acid sequence, 84 residues long: U4-theraphotoxin-Hhn1a (84 aa).

Positions 1 to 22 (MKVTLIAILTCAAVLVLHTTAA) are cleaved as a signal peptide. Positions 23–47 (EELEESQLMEVGMPDTELAAVDEER) are excised as a propeptide. 3 disulfides stabilise this stretch: Cys-51/Cys-65, Cys-55/Cys-76, and Cys-70/Cys-81.

Belongs to the neurotoxin 12 (Hwtx-2) family. 02 (Hwtx-2) subfamily. Expressed by the venom gland.

It is found in the secreted. Its function is as follows. Postsynaptic neurotoxin. This is U4-theraphotoxin-Hhn1a from Cyriopagopus hainanus (Chinese bird spider).